A 156-amino-acid polypeptide reads, in one-letter code: 17.4 kDa class I heat shock protein (156 aa).

In terms of domain architecture, sHSP spans 42 to 156 (DVAAFTNAKV…PEVKSVDISG (115 aa)).

It belongs to the small heat shock protein (HSP20) family. As to quaternary structure, may form oligomeric structures. Binds to AKR2A.

The protein localises to the cytoplasm. In Arabidopsis thaliana (Mouse-ear cress), this protein is 17.4 kDa class I heat shock protein (HSP17.4A).